The following is a 380-amino-acid chain: Probable inactive dehydrogenase easA (380 aa).

FMN-binding positions include 25-27 (PMT), Ala-60, Gln-102, and His-171. 2 residues coordinate substrate: His-171 and Asn-174. Residues Lys-223, Gly-299, 324-325 (GR), and Arg-325 each bind FMN. Tyr-352 provides a ligand contact to substrate.

It belongs to the NADH:flavin oxidoreductase/NADH oxidase family.

Probable inactive dehydrogenase; part of the gene cluster that mediates the biosynthesis of fungal ergot alkaloid. DmaW catalyzes the first step of ergot alkaloid biosynthesis by condensing dimethylallyl diphosphate (DMAP) and tryptophan to form 4-dimethylallyl-L-tryptophan. The second step is catalyzed by the methyltransferase easF that methylates 4-dimethylallyl-L-tryptophan in the presence of S-adenosyl-L-methionine, resulting in the formation of 4-dimethylallyl-L-abrine. The catalase easC and the FAD-dependent oxidoreductase easE then transform 4-dimethylallyl-L-abrine to chanoclavine-I which is further oxidized by easD in the presence of NAD(+), resulting in the formation of chanoclavine-I aldehyde. Agroclavine dehydrogenase easG then mediates the conversion of chanoclavine-I aldehyde to agroclavine via a non-enzymatic adduct reaction: the substrate is an iminium intermediate that is formed spontaneously from chanoclavine-I aldehyde in the presence of glutathione. The presence of easA is not required to complete this reaction. Further conversion of agroclavine to paspalic acid is a two-step process involving oxidation of agroclavine to elymoclavine and of elymoclavine to paspalic acid, the second step being performed by the elymoclavine oxidase cloA. Paspalic acid is then further converted to D-lysergic acid. Ergopeptines are assembled from D-lysergic acid and three different amino acids by the D-lysergyl-peptide-synthetases composed each of a monomudular and a trimodular nonribosomal peptide synthetase subunit. LpsB and lpsC encode the monomodular subunits responsible for D-lysergic acid activation and incorporation into the ergopeptine backbone. LpsA1 and A2 subunits encode the trimodular nonribosomal peptide synthetase assembling the tripeptide portion of ergopeptines. LpsA1 is responsible for formation of the major ergopeptine, ergotamine, and lpsA2 for alpha-ergocryptine, the minor ergopeptine of the total alkaloid mixture elaborated by C.purpurea. D-lysergyl-tripeptides are assembled by the nonribosomal peptide synthetases and released as N-(D-lysergyl-aminoacyl)-lactams. Cyclolization of the D-lysergyl-tripeptides is performed by the Fe(2+)/2-ketoglutarate-dependent dioxygenase easH which introduces a hydroxyl group into N-(D-lysergyl-aminoacyl)-lactam at alpha-C of the aminoacyl residue followed by spontaneous condensation with the terminal lactam carbonyl group. This is Probable inactive dehydrogenase easA from Claviceps purpurea (strain 20.1) (Ergot fungus).